A 397-amino-acid polypeptide reads, in one-letter code: Cytoplasmic tRNA 2-thiolation protein 2 (397 aa).

This sequence belongs to the CTU2/NCS2 family.

It localises to the cytoplasm. Its pathway is tRNA modification; 5-methoxycarbonylmethyl-2-thiouridine-tRNA biosynthesis. In terms of biological role, plays a central role in 2-thiolation of mcm(5)S(2)U at tRNA wobble positions of tRNA(Lys), tRNA(Glu) and tRNA(Gln). May act by forming a heterodimer with NCS6/CTU1 that ligates sulfur from thiocarboxylated URM1 onto the uridine of tRNAs at wobble position. The chain is Cytoplasmic tRNA 2-thiolation protein 2 from Drosophila grimshawi (Hawaiian fruit fly).